The primary structure comprises 353 residues: N-acetyl-gamma-glutamyl-phosphate reductase (353 aa).

Residue cysteine 157 is part of the active site.

This sequence belongs to the NAGSA dehydrogenase family. Type 1 subfamily.

The protein localises to the cytoplasm. It catalyses the reaction N-acetyl-L-glutamate 5-semialdehyde + phosphate + NADP(+) = N-acetyl-L-glutamyl 5-phosphate + NADPH + H(+). It participates in amino-acid biosynthesis; L-arginine biosynthesis; N(2)-acetyl-L-ornithine from L-glutamate: step 3/4. Its function is as follows. Catalyzes the NADPH-dependent reduction of N-acetyl-5-glutamyl phosphate to yield N-acetyl-L-glutamate 5-semialdehyde. The sequence is that of N-acetyl-gamma-glutamyl-phosphate reductase from Bordetella avium (strain 197N).